The sequence spans 371 residues: Ligninase LG5 (371 aa).

A signal peptide spans M1 to G21. A propeptide spanning residues A22 to R27 is cleaved from the precursor. 4 disulfide bridges follow: C30-C42, C41-C311, C61-C146, and C275-C344. H74 acts as the Proton acceptor in catalysis. Ca(2+) is bound by residues D75, G92, D94, and S96. A heme b-binding site is contributed by H202. Residues S203, D220, T222, I225, and D227 each contribute to the Ca(2+) site. N283 carries N-linked (GlcNAc...) asparagine glycosylation. Residues F349–A371 are disordered.

Belongs to the peroxidase family. Ligninase subfamily. Ca(2+) serves as cofactor. Requires heme b as cofactor.

The enzyme catalyses 1-(3,4-dimethoxyphenyl)-2-(2-methoxyphenoxy)propane-1,3-diol + H2O2 = 3,4-dimethoxybenzaldehyde + guaiacol + glycolaldehyde + H2O. It catalyses the reaction 2 (3,4-dimethoxyphenyl)methanol + H2O2 = 2 (3,4-dimethoxyphenyl)methanol radical + 2 H2O. It functions in the pathway secondary metabolite metabolism; lignin degradation. Depolymerization of lignin. Catalyzes the C(alpha)-C(beta) cleavage of the propyl side chains of lignin. This Phanerodontia chrysosporium (White-rot fungus) protein is Ligninase LG5 (GLG5).